Here is a 518-residue protein sequence, read N- to C-terminus: Crotonobetaine/carnitine--CoA ligase (518 aa).

Belongs to the ATP-dependent AMP-binding enzyme family.

It catalyses the reaction 4-(trimethylamino)butanoate + ATP + CoA = 4-(trimethylamino)butanoyl-CoA + AMP + diphosphate. The catalysed reaction is crotonobetaine + ATP + CoA = crotonobetainyl-CoA + AMP + diphosphate. It carries out the reaction (R)-carnitine + ATP + CoA = (R)-carnitinyl-CoA + AMP + diphosphate. Its pathway is amine and polyamine metabolism; carnitine metabolism. Catalyzes the transfer of CoA to carnitine, generating the initial carnitinyl-CoA needed for the CaiB reaction cycle. Also has activity toward crotonobetaine and gamma-butyrobetaine. In Proteus mirabilis (strain HI4320), this protein is Crotonobetaine/carnitine--CoA ligase.